Here is a 162-residue protein sequence, read N- to C-terminus: Ribosome maturation factor RimP (162 aa).

It belongs to the RimP family.

The protein localises to the cytoplasm. Required for maturation of 30S ribosomal subunits. In Beutenbergia cavernae (strain ATCC BAA-8 / DSM 12333 / CCUG 43141 / JCM 11478 / NBRC 16432 / NCIMB 13614 / HKI 0122), this protein is Ribosome maturation factor RimP.